The sequence spans 267 residues: Putative ABC transporter permease protein MJ0413 (267 aa).

A run of 7 helical transmembrane segments spans residues 18–38, 48–68, 78–98, 115–135, 136–156, 188–208, and 228–248; these read VLKI…AIYI, EAVI…GSLI, VISG…LMGY, PIPP…GEMS, MIFI…ISGV, PSIL…VVAA, and LSRM…GLVL. The 182-residue stretch at 71 to 252 folds into the ABC transmembrane type-1 domain; that stretch reads TIISIKRVIS…LIGLVLDRGL (182 aa).

Belongs to the binding-protein-dependent transport system permease family. CysTW subfamily.

The protein localises to the cell membrane. Its function is as follows. Probably part of a binding-protein-dependent transport system. Probably responsible for the translocation of the substrate across the membrane. This is Putative ABC transporter permease protein MJ0413 from Methanocaldococcus jannaschii (strain ATCC 43067 / DSM 2661 / JAL-1 / JCM 10045 / NBRC 100440) (Methanococcus jannaschii).